The chain runs to 335 residues: Pro-cathepsin H (335 aa).

An N-terminal signal peptide occupies residues 1-22 (MWAVLSLLCAGAWLLGPPACGA). A propeptide spanning residues 23–97 (SNLAVSSFEK…DEIRHKYLWS (75 aa)) is cleaved from the precursor. N-linked (GlcNAc...) asparagine glycosylation is found at Asn72 and Asn101. 4 disulfides stabilise this stretch: Cys102-Cys327, Cys138-Cys181, Cys172-Cys214, and Cys272-Cys322. Residues 107–115 (GNYLRGTGP) constitute a propeptide that is removed on maturation. Residue Cys141 is part of the active site. Asn230 is a glycosylation site (N-linked (GlcNAc...) asparagine). Active-site residues include His281 and Asn301.

This sequence belongs to the peptidase C1 family. In terms of assembly, composed of cathepsin H and mini chain; disulfide-linked. Cathepsin H may be split into heavy and light chain. All chains are held together by disulfide bonds.

The protein resides in the lysosome. The enzyme catalyses Hydrolysis of proteins, acting as an aminopeptidase (notably, cleaving Arg-|-Xaa bonds) as well as an endopeptidase.. Its function is as follows. Important for the overall degradation of proteins in lysosomes. The protein is Pro-cathepsin H (CTSH) of Sus scrofa (Pig).